A 405-amino-acid polypeptide reads, in one-letter code: Type II secretion system protein F (405 aa).

Residues 1–168 are Cytoplasmic-facing; that stretch reads MAAFEYLALD…QRQQSRQKIQ (168 aa). Ca(2+) contacts are provided by threonine 97, glutamate 151, and aspartate 155. Residues 169 to 189 form a helical membrane-spanning segment; that stretch reads LALLYPVILMVASLAIVGFLL. Over 190–219 the chain is Periplasmic; the sequence is GYVVPDVVRVFIDSGQTLPLLTRVLIGVSD. The helical transmembrane segment at 220 to 239 threads the bilayer; sequence WVKAWGALAFVAAIGGVIGF. At 240-376 the chain is on the cytoplasmic side; that stretch reads RYALRKDAFR…IGLMVGLFEP (137 aa). The chain crosses the membrane as a helical span at residues 377–397; sequence FMLIFMGAVVLVIVLAILLPI. At 398–405 the chain is on the periplasmic side; that stretch reads LSLNQLVG.

It belongs to the GSP F family. Type II secretion system is composed of four main components: the outer membrane complex, the inner membrane complex, the cytoplasmic secretion ATPase and the periplasm-spanning pseudopilus. Homodimer. Interacts with XcpR/GspE and XcpY/GspL components.

It is found in the cell inner membrane. Its function is as follows. Component of the type II secretion system inner membrane complex required for the energy-dependent secretion of extracellular factors such as proteases and toxins from the periplasm. This chain is Type II secretion system protein F (xcpS), found in Pseudomonas aeruginosa (strain ATCC 15692 / DSM 22644 / CIP 104116 / JCM 14847 / LMG 12228 / 1C / PRS 101 / PAO1).